The sequence spans 239 residues: Geranylgeranylglyceryl phosphate synthase (239 aa).

Mg(2+)-binding residues include Asp18 and Ser45. Sn-glycerol 1-phosphate-binding positions include 166–172, 197–198, and 219–220; these read YLEAGSG, GG, and GT.

This sequence belongs to the GGGP/HepGP synthase family. Group II subfamily. Mg(2+) is required as a cofactor.

It localises to the cytoplasm. The enzyme catalyses sn-glycerol 1-phosphate + (2E,6E,10E)-geranylgeranyl diphosphate = sn-3-O-(geranylgeranyl)glycerol 1-phosphate + diphosphate. It participates in membrane lipid metabolism; glycerophospholipid metabolism. In terms of biological role, prenyltransferase that catalyzes the transfer of the geranylgeranyl moiety of geranylgeranyl diphosphate (GGPP) to the C3 hydroxyl of sn-glycerol-1-phosphate (G1P). This reaction is the first ether-bond-formation step in the biosynthesis of archaeal membrane lipids. This is Geranylgeranylglyceryl phosphate synthase from Pyrobaculum arsenaticum (strain DSM 13514 / JCM 11321 / PZ6).